Here is a 405-residue protein sequence, read N- to C-terminus: MENIMTLPKIKHVRAWFIGGATAEKGAGGGDYHDQGGNHWIDDHIATPMSKYRDYEQSRQSFGINVLGTLIVEVEAENGQTGFAVSTAGEMGCFIVEKHLNRFIEGKCVSDIKLIHDQMLGATMYYSGSGGLVMNTISCVDLALWDLFGKVVGLPVYKLLGGAVRDEIQFYATGARPDLAKEMGFIGGKMPTHWGPHDGDAGIRKDAAMVADMREKCGPDFWLMLDCWMSQDVNYATKLAHACAPFNLKWIEECLPPQQYEGYRELKRNAPAGMMVTSGEHHGTLQSFRTLAETGIDIMQPDVGWCGGLTTLVEIAALAKSRGQLVVPHGSSVYSHHAVITFTNTPFSEFLMTSPDCSTLRPQFDPILLDEPVPVNGRIHKSVLDKPGFGVELNRDCHLKRPYSH.

Substrate is bound by residues His33 and Arg59. Mg(2+) is bound by residues Asp226, Glu252, and Glu280. His329 acts as the Proton acceptor in catalysis. Position 349 (Glu349) interacts with substrate.

It belongs to the mandelate racemase/muconate lactonizing enzyme family. RhamD subfamily. Homooctamer; tetramer of dimers. Mg(2+) is required as a cofactor.

It catalyses the reaction L-rhamnonate = 2-dehydro-3-deoxy-L-rhamnonate + H2O. Its function is as follows. Catalyzes the dehydration of L-rhamnonate to 2-keto-3-deoxy-L-rhamnonate (KDR). The sequence is that of L-rhamnonate dehydratase from Salmonella typhi.